The following is a 1035-amino-acid chain: Isoleucine--tRNA ligase (1035 aa).

Positions 48 to 58 (PTANGRPHVGH) match the 'HIGH' region motif. The 'KMSKS' region motif lies at 589 to 593 (KMSKH). Lys592 lines the ATP pocket.

It belongs to the class-I aminoacyl-tRNA synthetase family. IleS type 2 subfamily. Monomer. Zn(2+) is required as a cofactor.

It is found in the cytoplasm. It carries out the reaction tRNA(Ile) + L-isoleucine + ATP = L-isoleucyl-tRNA(Ile) + AMP + diphosphate. Catalyzes the attachment of isoleucine to tRNA(Ile). As IleRS can inadvertently accommodate and process structurally similar amino acids such as valine, to avoid such errors it has two additional distinct tRNA(Ile)-dependent editing activities. One activity is designated as 'pretransfer' editing and involves the hydrolysis of activated Val-AMP. The other activity is designated 'posttransfer' editing and involves deacylation of mischarged Val-tRNA(Ile). This chain is Isoleucine--tRNA ligase, found in Clostridium acetobutylicum (strain ATCC 824 / DSM 792 / JCM 1419 / IAM 19013 / LMG 5710 / NBRC 13948 / NRRL B-527 / VKM B-1787 / 2291 / W).